A 362-amino-acid polypeptide reads, in one-letter code: Probable choline-phosphate cytidylyltransferase (362 aa).

The span at 1–37 (MGEEGIKINDTHKRRIDEVEPSEKEDNVERQTKKYNF) shows a compositional bias: basic and acidic residues. The disordered stretch occupies residues 1–79 (MGEEGIKIND…VSPVEEEPRD (79 aa)). Residues 109–117 (VFDLFHIGH) and lysine 147 contribute to the CTP site. Lysine 147 and tryptophan 176 together coordinate substrate. CTP-binding positions include 193–194 (HD), tyrosine 198, and 221–225 (RTEGV). Positions 308–362 (KNPLHGSSEPSSPGPTGFLGGINRWMQRRSSSHYDLPRVGNEIAASSSSATEENH) are disordered. 2 stretches are compositionally biased toward low complexity: residues 313 to 323 (GSSEPSSPGPT) and 351 to 362 (AASSSSATEENH). Phosphoserine occurs at positions 315 and 319. Threonine 323 is modified (phosphothreonine). At serine 355 the chain carries Phosphoserine.

The protein belongs to the cytidylyltransferase family.

The protein localises to the nucleus. It catalyses the reaction phosphocholine + CTP + H(+) = CDP-choline + diphosphate. The protein is Probable choline-phosphate cytidylyltransferase of Schizosaccharomyces pombe (strain 972 / ATCC 24843) (Fission yeast).